The chain runs to 143 residues: Putative 2'-deoxynucleoside 5'-phosphate N-hydrolase 1 (143 aa).

Residues histidine 37, glutamate 82, and 106–108 (SAM) each bind substrate.

The protein belongs to the 2'-deoxynucleoside 5'-phosphate N-hydrolase 1 family. As to quaternary structure, monomer and homodimer.

The catalysed reaction is a pyrimidine 2'-deoxyribonucleoside 5'-phosphate + H2O = a pyrimidine nucleobase + 2-deoxy-D-ribose 5-phosphate. It carries out the reaction a purine 2'-deoxyribonucleoside 5'-phosphate + H2O = a purine nucleobase + 2-deoxy-D-ribose 5-phosphate. Functionally, catalyzes the cleavage of the N-glycosidic bond of deoxyribonucleoside 5'-monophosphates to yield deoxyribose 5-phosphate and a purine or pyrimidine base. The sequence is that of Putative 2'-deoxynucleoside 5'-phosphate N-hydrolase 1 from Thermofilum pendens (strain DSM 2475 / Hrk 5).